The primary structure comprises 302 residues: MEQKHLTHLQQLEAESIHILREVVAEFRNPVMMYSIGKDSSVMLHLARKAFYPGKLPFPLLHVDTGWKFREMYHFRDHTAKAYGFELLVHKNLEGQAMGINPFVHGSAKHTNIMKTESLKQAMNKYNFDAAFGGARRDEEKSRAKERIYSFRDRFHRWDPKNQRPELWHNYNGQINQGESIRVFPLSNWTEIEIWQYIFLENIDIVPLYFAKERPILERNGMLIMIDDDRIDLQFGETVGQRMVRFRTLGCWPLTGAVESTAQTLPDIIKEMLISATSERQGRVIDTDQSSSMEMKKRQGYF.

It belongs to the PAPS reductase family. CysD subfamily. As to quaternary structure, heterodimer composed of CysD, the smaller subunit, and CysN.

It catalyses the reaction sulfate + ATP + H(+) = adenosine 5'-phosphosulfate + diphosphate. It functions in the pathway sulfur metabolism; hydrogen sulfide biosynthesis; sulfite from sulfate: step 1/3. With CysN forms the ATP sulfurylase (ATPS) that catalyzes the adenylation of sulfate producing adenosine 5'-phosphosulfate (APS) and diphosphate, the first enzymatic step in sulfur assimilation pathway. APS synthesis involves the formation of a high-energy phosphoric-sulfuric acid anhydride bond driven by GTP hydrolysis by CysN coupled to ATP hydrolysis by CysD. The sequence is that of Sulfate adenylyltransferase subunit 2 from Baumannia cicadellinicola subsp. Homalodisca coagulata.